The following is a 241-amino-acid chain: MNFTEGCEATGRRPGSAGSRRRRAPRPGPVALLPLLLPLLLPPAAAVPLPAAADSSGEVGLEEEAGARRALLDCEPLARVLRDRAVQLQDEMCKKFTVCENSMEMLVRNNLNLPKVTEEDGCLLAGFDEEKCLTKLSSGLFAFQTYLEFIQETFDSEKQNVESLCYSTKHLAATIRQMVINPDEVVIPDSAAQKSLLANLKSDKDWIEKITMHLILRDFTSFMEKTVRAVRYLKKTRSFSA.

The disordered stretch occupies residues 1–25 (MNFTEGCEATGRRPGSAGSRRRRAP). Residues 1–46 (MNFTEGCEATGRRPGSAGSRRRRAPRPGPVALLPLLLPLLLPPAAA) form the signal peptide. A disulfide bridge connects residues C122 and C132.

It belongs to the IL-6 superfamily. In terms of assembly, component of a hexamer of two molecules each of IL6, IL6R and IL6ST; first binds to IL6R to associate with the signaling subunit IL6ST.

The protein localises to the secreted. Its function is as follows. Cytokine with a wide variety of biological functions in immunity, tissue regeneration, and metabolism. Binds to IL6R, then the complex associates to the signaling subunit IL6ST/gp130 to trigger the intracellular IL6-signaling pathway. The interaction with the membrane-bound IL6R and IL6ST stimulates 'classic signaling', whereas the binding of IL6 and soluble IL6R to IL6ST stimulates 'trans-signaling'. Alternatively, 'cluster signaling' occurs when membrane-bound IL6:IL6R complexes on transmitter cells activate IL6ST receptors on neighboring receiver cells. This chain is Interleukin-6 (IL6), found in Gallus gallus (Chicken).